A 269-amino-acid polypeptide reads, in one-letter code: MNILIVNRYGDPDVEEFSYELEKLLHHHGHHTSIYKENLLGEAPPLFSGEHPPDLVIVIGGDGTILLTTQRMPVQVPIIGINYGEVGFLADIEPEEMSTFVSHLTEPLPLEARMRIELRINGQHIGTALNEALIVTDRPAKMLKFLIHINGNVAERFRADGLIISTPTGSTAYAMSAGGPIVDPRVEGFLMVPLAPFMLSNRPHLIDSSRTVSITLEATKPAKLVIDGQTEIHLETSSTIELSKSPSPALFIDAGQNFFEKINRKLRHL.

Residue aspartate 62 is the Proton acceptor of the active site. Residues 62–63 (DG), 130–131 (NE), lysine 141, arginine 158, aspartate 160, 171–176 (TAYAMS), alanine 195, and glutamine 229 contribute to the NAD(+) site.

The protein belongs to the NAD kinase family. A divalent metal cation is required as a cofactor.

It is found in the cytoplasm. It catalyses the reaction NAD(+) + ATP = ADP + NADP(+) + H(+). In terms of biological role, involved in the regulation of the intracellular balance of NAD and NADP, and is a key enzyme in the biosynthesis of NADP. Catalyzes specifically the phosphorylation on 2'-hydroxyl of the adenosine moiety of NAD to yield NADP. This chain is NAD kinase, found in Methanospirillum hungatei JF-1 (strain ATCC 27890 / DSM 864 / NBRC 100397 / JF-1).